We begin with the raw amino-acid sequence, 614 residues long: UvrABC system protein C (614 aa).

The 79-residue stretch at 26–104 (NLPGVYKMLG…IKEYRPPYNV (79 aa)) folds into the GIY-YIG domain. Residues 215–250 (SDIHSALIEKMEASAEELDFEKAVFYRDQLSMLREV) enclose the UVR domain.

The protein belongs to the UvrC family. In terms of assembly, interacts with UvrB in an incision complex.

The protein resides in the cytoplasm. Functionally, the UvrABC repair system catalyzes the recognition and processing of DNA lesions. UvrC both incises the 5' and 3' sides of the lesion. The N-terminal half is responsible for the 3' incision and the C-terminal half is responsible for the 5' incision. The sequence is that of UvrABC system protein C from Psychrobacter arcticus (strain DSM 17307 / VKM B-2377 / 273-4).